The chain runs to 232 residues: Membrane steroid-binding protein 1 (232 aa).

Residues 25-45 traverse the membrane as a helical segment; sequence AAFFTAVAAAAALYHVVSGIF. Disordered regions lie at residues 48–77 and 172–232; these read PPPPPPPRPRDEPEAEPLPPPVQLGEVSEE and TVPV…AKES. Residues 71-170 enclose the Cytochrome b5 heme-binding domain; the sequence is LGEVSEEELR…GKYVKVGTVK (100 aa). The tract at residues 73 to 170 is steroid-binding; that stretch reads EVSEEELRQY…GKYVKVGTVK (98 aa). Low complexity predominate over residues 179 to 193; sequence APSTSPETTETAAAA. Residues 194–219 are compositionally biased toward basic and acidic residues; that stretch reads EPEKAPATEEKPREVSSEEVKEKEDA.

This sequence belongs to the cytochrome b5 family. MAPR subfamily. As to quaternary structure, interacts with SERL2. As to expression, expressed in leaf sheaths, leaf blades and panicles.

Its subcellular location is the cell membrane. In terms of biological role, binds multiple steroid compounds. May act as a coreceptor with SERL2 and enhance its endocytosis. This Oryza sativa subsp. japonica (Rice) protein is Membrane steroid-binding protein 1.